The primary structure comprises 235 residues: Putative 4'-phosphopantetheinyl transferase HI_0152 (235 aa).

Mg(2+)-binding residues include D112, E114, and E155.

The protein belongs to the P-Pant transferase superfamily. Gsp/Sfp/HetI/AcpT family. The cofactor is Mg(2+).

In terms of biological role, may transfer the 4'-phosphopantetheine moiety from coenzyme A (CoA) to a serine residue of a carrier protein domain. This is Putative 4'-phosphopantetheinyl transferase HI_0152 from Haemophilus influenzae (strain ATCC 51907 / DSM 11121 / KW20 / Rd).